Consider the following 371-residue polypeptide: Anhydro-N-acetylmuramic acid kinase (371 aa).

12–19 (GTSADGID) contacts ATP.

It belongs to the anhydro-N-acetylmuramic acid kinase family.

It carries out the reaction 1,6-anhydro-N-acetyl-beta-muramate + ATP + H2O = N-acetyl-D-muramate 6-phosphate + ADP + H(+). It participates in amino-sugar metabolism; 1,6-anhydro-N-acetylmuramate degradation. The protein operates within cell wall biogenesis; peptidoglycan recycling. In terms of biological role, catalyzes the specific phosphorylation of 1,6-anhydro-N-acetylmuramic acid (anhMurNAc) with the simultaneous cleavage of the 1,6-anhydro ring, generating MurNAc-6-P. Is required for the utilization of anhMurNAc either imported from the medium or derived from its own cell wall murein, and thus plays a role in cell wall recycling. The protein is Anhydro-N-acetylmuramic acid kinase of Saccharophagus degradans (strain 2-40 / ATCC 43961 / DSM 17024).